Consider the following 976-residue polypeptide: Terminal uridylyltransferase 1 (976 aa).

2 disordered regions span residues 1–47 (MVSK…DADF) and 129–185 (TGRS…TTEG). The required for oligomerization and may contribute to the incorporation into the MPsome complex stretch occupies residues 1 to 188 (MVSKYHRLLQ…EDDTTEGPRG (188 aa)). Residues 147-183 (ADDESDGNLDTDGSDASEGDEVESTTDADVYGEDDTT) are compositionally biased toward acidic residues. Residues 190–221 (VRLYSCDACPHAVFTTHAALLAHAEEHHADLL) form a C2H2-type; atypical zinc finger. Zn(2+) contacts are provided by cysteine 195, cysteine 198, histidine 212, and histidine 217. UTP-binding positions include serine 298 and 309–312 (ADID). The Mg(2+) site is built by aspartate 310 and aspartate 312. Arginine 358 is a binding site for RNA. The region spanning 366–425 (ASSPILTVARRDAEDVVARSIRFILNGPATREDRLLLEGSVRDAVGPTGVQQVWWNRTSD) is the PAP-associated domain. Residues 480-484 (GIRNS), lysine 505, lysine 509, and 523-524 (SY) each bind UTP. The short motif at 652-661 (IEDPYEENLN) is the Nucleotide recognition motif (NRM) element. An important for catalytic activity and RNA binding region spans residues 700-976 (DSSGTPAAGG…SKVTPFKSPR (277 aa)). Positions 732-755 (SESRRLPQSNSDNSGRIANGDNES) are disordered.

It belongs to the DNA polymerase type-B-like family. Oligomer. Component of the mitochondrial 3' processome (MPsome) complex composed at least of terminal uridylyltransferase KRET1/TUT1, 3'-5' exonuclease DSS1, MPSS1, MPSS2 and MPSS3. Within the complex, interacts with DSS1, MPSS1 and MPSS3. Mg(2+) is required as a cofactor. Mn(2+) serves as cofactor.

Its subcellular location is the mitochondrion. The enzyme catalyses RNA(n) + UTP = RNA(n)-3'-uridine ribonucleotide + diphosphate. Functionally, terminal uridylyltransferase which is involved in the post-transcriptional editing of mitochondrial RNA, a process involving the addition and deletion of uridine (U) nucleotides in the pre-RNA. Specifically, catalyzes the addition of Us to the 3'-hydroxyl group of guided RNA (gRNA), ribosomal RNA (rRNA) and some mRNAs. As part of the mitochondrial 3' processome (MPsome), catalyzes the primary 3' uridylation of gRNA precursors to facilitate their recognition and to induce their processive 3'-5' degradation by DSS1, and the secondary 3' uridylation of mature gRNAs. Involved in the 3' uridylylation of the long A/U tail of some edited and never-edited mRNAs. Promotes 3' uridylylation-mediated decay of some never-edited mRNAs. Does not mediate RNA-independent UTP polymerization. This Trypanosoma brucei brucei protein is Terminal uridylyltransferase 1.